The chain runs to 279 residues: Aspartate/glutamate leucyltransferase (279 aa).

The segment at 245–279 (ARERGARPPRGPGALKDACDLPLSDAQPADIEDLD) is disordered.

It belongs to the R-transferase family. Bpt subfamily.

It localises to the cytoplasm. It catalyses the reaction N-terminal L-glutamyl-[protein] + L-leucyl-tRNA(Leu) = N-terminal L-leucyl-L-glutamyl-[protein] + tRNA(Leu) + H(+). The enzyme catalyses N-terminal L-aspartyl-[protein] + L-leucyl-tRNA(Leu) = N-terminal L-leucyl-L-aspartyl-[protein] + tRNA(Leu) + H(+). Functions in the N-end rule pathway of protein degradation where it conjugates Leu from its aminoacyl-tRNA to the N-termini of proteins containing an N-terminal aspartate or glutamate. This Caulobacter vibrioides (strain ATCC 19089 / CIP 103742 / CB 15) (Caulobacter crescentus) protein is Aspartate/glutamate leucyltransferase.